Reading from the N-terminus, the 247-residue chain is Adenosylcobinamide-GDP ribazoletransferase (247 aa).

5 helical membrane passes run 34-54 (IVMFPFIGLILGGVSGLIFIL), 59-79 (CGIPLAALFCILALALLTGGF), 113-133 (GGLALIFVLLTKILVVSELAL), 138-158 (MLAALAAACAAGRGSAVLLMY), and 187-207 (LAVIVATVLLPGMQGLAAMVV).

Belongs to the CobS family. It depends on Mg(2+) as a cofactor.

It localises to the cell inner membrane. It catalyses the reaction alpha-ribazole + adenosylcob(III)inamide-GDP = adenosylcob(III)alamin + GMP + H(+). The enzyme catalyses alpha-ribazole 5'-phosphate + adenosylcob(III)inamide-GDP = adenosylcob(III)alamin 5'-phosphate + GMP + H(+). It participates in cofactor biosynthesis; adenosylcobalamin biosynthesis; adenosylcobalamin from cob(II)yrinate a,c-diamide: step 7/7. Its function is as follows. Joins adenosylcobinamide-GDP and alpha-ribazole to generate adenosylcobalamin (Ado-cobalamin). Also synthesizes adenosylcobalamin 5'-phosphate from adenosylcobinamide-GDP and alpha-ribazole 5'-phosphate. The chain is Adenosylcobinamide-GDP ribazoletransferase from Salmonella choleraesuis (strain SC-B67).